The sequence spans 475 residues: Ribulose bisphosphate carboxylase large chain (475 aa).

A propeptide spanning residues 1–2 (MV) is cleaved from the precursor. Pro-3 carries the N-acetylproline modification. Residue Lys-14 is modified to N6,N6,N6-trimethyllysine. Substrate is bound by residues Asn-123 and Thr-173. The active-site Proton acceptor is the Lys-175. Lys-177 provides a ligand contact to substrate. Mg(2+) is bound by residues Lys-201, Asp-203, and Glu-204. Residue Lys-201 is modified to N6-carboxylysine. The active-site Proton acceptor is His-294. Substrate contacts are provided by Arg-295, His-327, and Ser-379.

The protein belongs to the RuBisCO large chain family. Type I subfamily. As to quaternary structure, heterohexadecamer of 8 large chains and 8 small chains. The cofactor is Mg(2+).

The protein localises to the plastid. The protein resides in the chloroplast. It catalyses the reaction 2 (2R)-3-phosphoglycerate + 2 H(+) = D-ribulose 1,5-bisphosphate + CO2 + H2O. The enzyme catalyses D-ribulose 1,5-bisphosphate + O2 = 2-phosphoglycolate + (2R)-3-phosphoglycerate + 2 H(+). RuBisCO catalyzes two reactions: the carboxylation of D-ribulose 1,5-bisphosphate, the primary event in carbon dioxide fixation, as well as the oxidative fragmentation of the pentose substrate in the photorespiration process. Both reactions occur simultaneously and in competition at the same active site. This chain is Ribulose bisphosphate carboxylase large chain, found in Stigeoclonium helveticum (Green alga).